The chain runs to 270 residues: Aliphatic sulfonates import ATP-binding protein SsuB 3 (270 aa).

The ABC transporter domain maps to 17–238; it reads LAVRKLKKAF…VRGSHRLAAL (222 aa). 49 to 56 is an ATP binding site; sequence GRSGCGKS.

It belongs to the ABC transporter superfamily. Aliphatic sulfonates importer (TC 3.A.1.17.2) family. In terms of assembly, the complex is composed of two ATP-binding proteins (SsuB), two transmembrane proteins (SsuC) and a solute-binding protein (SsuA).

It localises to the cell inner membrane. The catalysed reaction is ATP + H2O + aliphatic sulfonate-[sulfonate-binding protein]Side 1 = ADP + phosphate + aliphatic sulfonateSide 2 + [sulfonate-binding protein]Side 1.. Functionally, part of the ABC transporter complex SsuABC involved in aliphatic sulfonates import. Responsible for energy coupling to the transport system. This Pseudomonas syringae pv. syringae (strain B728a) protein is Aliphatic sulfonates import ATP-binding protein SsuB 3.